Consider the following 129-residue polypeptide: AQCEATVESNDAMQYNVKEIVVDKSCKQFTMHLKHVGKMAKVAMGHNLVLTKDADKQAVATDGMGAGLAQDYVKAGDTRVIAHTKVIGGGESDSVTFDVSKIAAGENYAYFCSFPGHWAMMKGTLKLGS.

A Plastocyanin-like domain is found at 1-129 (AQCEATVESN…MMKGTLKLGS (129 aa)). A disulfide bond links cysteine 3 and cysteine 26. Cu cation contacts are provided by histidine 46, cysteine 112, histidine 117, and methionine 121.

The protein resides in the periplasm. In terms of biological role, transfers electrons from cytochrome c551 to cytochrome oxidase. This is Azurin-2 from Alcaligenes xylosoxydans xylosoxydans (Achromobacter xylosoxidans).